The primary structure comprises 119 residues: Beta-2-microglobulin (119 aa).

Residues 1–20 (MFRSVALAVLALLFLSGLEA) form the signal peptide. The Ig-like C1-type domain maps to 25–114 (PKIQVYSRHP…VTLSGPRTVK (90 aa)). C45 and C100 are disulfide-bonded.

The protein belongs to the beta-2-microglobulin family. As to quaternary structure, heterodimer of an alpha chain and a beta chain. Beta-2-microglobulin is the beta-chain of major histocompatibility complex class I molecules.

It is found in the secreted. Component of the class I major histocompatibility complex (MHC). Involved in the presentation of peptide antigens to the immune system. The chain is Beta-2-microglobulin (B2M) from Chlorocebus aethiops (Green monkey).